A 281-amino-acid chain; its full sequence is DegV domain-containing protein DR_1986 (281 aa).

Residues 3 to 278 (IAIVTDSTSD…PGAVGVALEP (276 aa)) form the DegV domain. 2 residues coordinate hexadecanoate: Thr61 and Ser93.

Its function is as follows. May bind long-chain fatty acids, such as palmitate, and may play a role in lipid transport or fatty acid metabolism. This Deinococcus radiodurans (strain ATCC 13939 / DSM 20539 / JCM 16871 / CCUG 27074 / LMG 4051 / NBRC 15346 / NCIMB 9279 / VKM B-1422 / R1) protein is DegV domain-containing protein DR_1986.